The sequence spans 712 residues: Sesterterpene synthase btcA (712 aa).

The segment at 1–332 is terpene cyclase; it reads MTTIWEHCVD…CANCPRHHAW (332 aa). Asp-96 is a binding site for Mg(2+). Substrate-binding positions include Asp-96, Asn-234, 238 to 242, and 328 to 329; these read SWDRE and RH. Residues 96–100 carry the DDXXD 1 motif; it reads DDLCD. Positions 234-242 match the NSE/DTE motif; the sequence is NDYWSWDRE. The tract at residues 333–706 is prenyltransferase; the sequence is RDEESSPSER…VMRIVLSRLS (374 aa). The disordered stretch occupies residues 334–373; that stretch reads DEESSPSERSFSPSNEGIEDPRLSPGASTTSSMSQKSSPA. 2 stretches are compositionally biased toward low complexity: residues 340–349 and 361–373; these read SERSFSPSNE and STTS…SSPA. The isopentenyl diphosphate site is built by Lys-414, Arg-417, and His-446. Mg(2+) contacts are provided by Asp-453 and Asp-457. The DDXXD 2 signature appears at 453–457; that stretch reads DDIED. A dimethylallyl diphosphate-binding site is contributed by Arg-462. Arg-463 contacts isopentenyl diphosphate. Dimethylallyl diphosphate is bound by residues Lys-540, Thr-541, Gln-580, Asn-587, Lys-597, and Lys-607.

This sequence in the N-terminal section; belongs to the terpene synthase family. The protein in the C-terminal section; belongs to the FPP/GGPP synthase family. As to quaternary structure, hexamer. Requires Mg(2+) as cofactor.

The enzyme catalyses isopentenyl diphosphate + (2E,6E)-farnesyl diphosphate = (2E,6E,10E)-geranylgeranyl diphosphate + diphosphate. It catalyses the reaction isopentenyl diphosphate + (2E,6E,10E)-geranylgeranyl diphosphate = (2E,6E,10E,14E)-geranylfarnesyl diphosphate + diphosphate. It functions in the pathway secondary metabolite biosynthesis; terpenoid biosynthesis. Functionally, bifunctional terpene synthase; part of the gene cluster that mediates the biosynthesis of betaestacins. The bifunctional terpene synthase btcA converts isopentenyl diphosphate (IPP) and dimethylallyl diphosphate (DMAPP) into the sesterterpene betaestacin I. The C-terminal prenyltransferase (PT) domain of btcA catalyzes formation of GFPP, whereas the N-terminal terpene cyclase (TC) domain catalyzes the cyclization of GFPP into betaestacin I. The cytochrome P450 monooxygenase btcB oxidizes the C25 methyl group of betaestacin I to yield the carboxylic acid betaestacin IV via the alcohol betaestacin III. The cytochrome P450 monooxygenase btcC further catalyzes the multistep oxidation of betaestacin IV to produce several compounds, including betaestacins Va, Vb, Vc and VI. In Colletotrichum orbiculare (strain 104-T / ATCC 96160 / CBS 514.97 / LARS 414 / MAFF 240422) (Cucumber anthracnose fungus), this protein is Sesterterpene synthase btcA.